The primary structure comprises 86 residues: Defensin-like protein 259 (86 aa).

Positions 1–25 (MKNASLKLPLLIFILVITSNLGAEA) are cleaved as a signal peptide. Disulfide bonds link cysteine 60-cysteine 76, cysteine 66-cysteine 83, and cysteine 70-cysteine 85.

This sequence belongs to the DEFL family.

It localises to the secreted. The chain is Defensin-like protein 259 from Arabidopsis thaliana (Mouse-ear cress).